Here is a 129-residue protein sequence, read N- to C-terminus: MSEITKEQVVDFIANMTVLELSQFIKELEEKFGVSAAAPAMGMMMAAPAAGEAAPAEEEKTEFDVILTNAGGNKIAVIKVVRALTGLGLKEAKAKVDELPSSIKEAVSKAEAEDAKKQLEESGATCEIK.

Belongs to the bacterial ribosomal protein bL12 family. Homodimer. Part of the ribosomal stalk of the 50S ribosomal subunit. Forms a multimeric L10(L12)X complex, where L10 forms an elongated spine to which 2 to 4 L12 dimers bind in a sequential fashion. Binds GTP-bound translation factors.

Its function is as follows. Forms part of the ribosomal stalk which helps the ribosome interact with GTP-bound translation factors. Is thus essential for accurate translation. This chain is Large ribosomal subunit protein bL12, found in Solidesulfovibrio magneticus (strain ATCC 700980 / DSM 13731 / RS-1) (Desulfovibrio magneticus).